Reading from the N-terminus, the 403-residue chain is S-adenosylmethionine synthase (403 aa).

Histidine 15 contacts ATP. Aspartate 17 is a Mg(2+) binding site. K(+) is bound at residue glutamate 43. 2 residues coordinate L-methionine: glutamate 56 and glutamine 99. The tract at residues 99-109 (QSPDINQGVDR) is flexible loop. Residues 166 to 168 (DAK), 232 to 233 (KF), aspartate 241, 247 to 248 (RK), alanine 264, and lysine 268 contribute to the ATP site. Aspartate 241 contributes to the L-methionine binding site. Residue lysine 272 coordinates L-methionine.

Belongs to the AdoMet synthase family. Homotetramer; dimer of dimers. Requires Mg(2+) as cofactor. K(+) serves as cofactor.

The protein resides in the cytoplasm. It carries out the reaction L-methionine + ATP + H2O = S-adenosyl-L-methionine + phosphate + diphosphate. It functions in the pathway amino-acid biosynthesis; S-adenosyl-L-methionine biosynthesis; S-adenosyl-L-methionine from L-methionine: step 1/1. In terms of biological role, catalyzes the formation of S-adenosylmethionine (AdoMet) from methionine and ATP. The overall synthetic reaction is composed of two sequential steps, AdoMet formation and the subsequent tripolyphosphate hydrolysis which occurs prior to release of AdoMet from the enzyme. This chain is S-adenosylmethionine synthase, found in Xylella fastidiosa (strain M12).